A 383-amino-acid polypeptide reads, in one-letter code: N-acetyldiaminopimelate deacetylase (383 aa).

Residue Asp-72 is part of the active site. Residue Glu-131 is the Proton acceptor of the active site.

The protein belongs to the peptidase M20A family. N-acetyldiaminopimelate deacetylase subfamily.

The enzyme catalyses N-acetyl-(2S,6S)-2,6-diaminopimelate + H2O = (2S,6S)-2,6-diaminopimelate + acetate. Its pathway is amino-acid biosynthesis; L-lysine biosynthesis via DAP pathway; LL-2,6-diaminopimelate from (S)-tetrahydrodipicolinate (acetylase route): step 3/3. In terms of biological role, catalyzes the conversion of N-acetyl-diaminopimelate to diaminopimelate and acetate. The chain is N-acetyldiaminopimelate deacetylase from Lacticaseibacillus casei (strain BL23) (Lactobacillus casei).